The chain runs to 250 residues: Large ribosomal subunit protein uL4 (250 aa).

Disordered stretches follow at residues 1–20 (MQVTVRDLDGDDAGTLDLPR) and 51–101 (YAGL…HGLD). Residues 92 to 101 (PKAEKDHGLD) are compositionally biased toward basic and acidic residues.

This sequence belongs to the universal ribosomal protein uL4 family. Part of the 50S ribosomal subunit.

Its function is as follows. One of the primary rRNA binding proteins, this protein initially binds near the 5'-end of the 23S rRNA. It is important during the early stages of 50S assembly. It makes multiple contacts with different domains of the 23S rRNA in the assembled 50S subunit and ribosome. Functionally, forms part of the polypeptide exit tunnel. The chain is Large ribosomal subunit protein uL4 from Halobacterium salinarum (strain ATCC 29341 / DSM 671 / R1).